We begin with the raw amino-acid sequence, 1119 residues long: DNA-directed RNA polymerase D subunit 2b (1119 aa).

Position 732 (D732) interacts with Mg(2+). Zn(2+) contacts are provided by C1055, C1058, C1080, and C1083. A C4-type zinc finger spans residues 1055–1083 (CRKCKTYANVIERTPSSGRKIRGPYCRVC).

It belongs to the RNA polymerase beta chain family. In terms of assembly, component of the RNA polymerase IVa and IVb (Pol IV) complexes.

The protein localises to the nucleus. The catalysed reaction is RNA(n) + a ribonucleoside 5'-triphosphate = RNA(n+1) + diphosphate. DNA-dependent RNA polymerase catalyzes the transcription of DNA into RNA using the four ribonucleoside triphosphates as substrates. Second largest component of RNA polymerase IVa and IVb which mediate short-interfering RNAs (siRNA) accumulation and subsequent RNA-directed DNA methylation-dependent (RdDM) silencing of endogenous repeated sequences, including transposable largest subunit. Also required for full erasure of methylation elements. Required for intercellular RNA interference (RNAi) leading to systemic post-transcriptional gene silencing. This Arabidopsis thaliana (Mouse-ear cress) protein is DNA-directed RNA polymerase D subunit 2b (NRPD2b).